The sequence spans 39 residues: Cytochrome b559 subunit beta (39 aa).

Residues 14–30 form a helical membrane-spanning segment; that stretch reads WLAVHGLAVPTVSFLGS. His18 provides a ligand contact to heme.

It belongs to the PsbE/PsbF family. As to quaternary structure, heterodimer of an alpha subunit and a beta subunit. PSII is composed of 1 copy each of membrane proteins PsbA, PsbB, PsbC, PsbD, PsbE, PsbF, PsbH, PsbI, PsbJ, PsbK, PsbL, PsbM, PsbT, PsbX, PsbY, PsbZ, Psb30/Ycf12, at least 3 peripheral proteins of the oxygen-evolving complex and a large number of cofactors. It forms dimeric complexes. Requires heme b as cofactor.

It is found in the plastid. Its subcellular location is the chloroplast thylakoid membrane. Functionally, this b-type cytochrome is tightly associated with the reaction center of photosystem II (PSII). PSII is a light-driven water:plastoquinone oxidoreductase that uses light energy to abstract electrons from H(2)O, generating O(2) and a proton gradient subsequently used for ATP formation. It consists of a core antenna complex that captures photons, and an electron transfer chain that converts photonic excitation into a charge separation. In Lotus japonicus (Lotus corniculatus var. japonicus), this protein is Cytochrome b559 subunit beta.